Reading from the N-terminus, the 464-residue chain is Keratin, type I cytoskeletal 28 (464 aa).

Residues 1-85 are head; sequence MSLRFSSGSR…GSEGGLFSGN (85 aa). Positions 86–121 are coil 1A; that stretch reads EKVTMQNLNDRLASYLDNVRALEEANAELERKIKSW. Residues 86–401 enclose the IF rod domain; it reads EKVTMQNLND…RLIDGDRNSC (316 aa). A linker 1 region spans residues 122–143; sequence YEKHGPGSCHGLDHDYSRYHLT. The coil 1B stretch occupies residues 144 to 235; that stretch reads IEDLKNKIIS…KNHEEEVKAL (92 aa). Residues 236–258 form a linker 12 region; that stretch reads QCVAGGNVNVEMNAAPGVDLTLL. The tract at residues 259–397 is coil 2; sequence LNNMRAEYED…ETYCRLIDGD (139 aa). The interval 398-464 is tail; the sequence is RNSCSKSKGF…NGKTKQRVPF (67 aa). Low complexity predominate over residues 402 to 417; sequence SKSKGFGSGSPGNSSK. Disordered stretches follow at residues 402-422 and 440-464; these read SKSK…LSRT and SSRV…RVPF.

It belongs to the intermediate filament family. Heterotetramer of two type I and two type II keratins.

It localises to the cytoplasm. Functionally, essential for the proper assembly of types I and II keratin protein complexes and the formation of keratin intermediate filaments in the inner root sheath (irs). In Bos taurus (Bovine), this protein is Keratin, type I cytoskeletal 28.